The chain runs to 244 residues: ATP synthase subunit a (244 aa).

7 helical membrane-spanning segments follow: residues 20–40 (FFDI…VIVI), 81–101 (GILF…LNVM), 113–133 (QLLV…IWGF), 140–160 (FLNI…LVFI), 176–196 (LFAN…AAIY), 202–222 (FIGI…LGIA), and 223–243 (FLQA…IINL).

It belongs to the ATPase A chain family. As to quaternary structure, F-type ATPases have 2 components, CF(1) - the catalytic core - and CF(0) - the membrane proton channel. CF(1) has five subunits: alpha(3), beta(3), gamma(1), delta(1), epsilon(1). CF(0) has three main subunits: a, b and c.

It is found in the mitochondrion inner membrane. Its function is as follows. Mitochondrial membrane ATP synthase (F(1)F(0) ATP synthase or Complex V) produces ATP from ADP in the presence of a proton gradient across the membrane which is generated by electron transport complexes of the respiratory chain. F-type ATPases consist of two structural domains, F(1) - containing the extramembraneous catalytic core and F(0) - containing the membrane proton channel, linked together by a central stalk and a peripheral stalk. During catalysis, ATP synthesis in the catalytic domain of F(1) is coupled via a rotary mechanism of the central stalk subunits to proton translocation. Key component of the proton channel; it may play a direct role in the translocation of protons across the membrane. The polypeptide is ATP synthase subunit a (atp6) (Dictyostelium discoideum (Social amoeba)).